Consider the following 172-residue polypeptide: Transcription factor MafF (172 aa).

Residues 51 to 76 form a basic motif region; that stretch reads RLKQRRRTLKNRGYAASCRVKRVCQK. The region spanning 51-114 is the bZIP domain; sequence RLKQRRRTLK…DALRGKCEAL (64 aa). The tract at residues 79-93 is leucine-zipper; it reads LQKQKSELEREVDKL. The disordered stretch occupies residues 140-172; it reads VKSAPSPGPGPAPGPGPASGPGPAPGPAPAACS. Over residues 145–172 the composition is skewed to pro residues; it reads SPGPGPAPGPGPASGPGPAPGPAPAACS.

The protein belongs to the bZIP family. Maf subfamily. Monomer and homo- or heterodimer. Interacts with MIP. Forms high affinity heterodimers with members of the CNC-bZIP family such as NFE2L1/NRF1.

The protein localises to the nucleus. In terms of biological role, since they lack a putative transactivation domain, the small Mafs behave as transcriptional repressors when they dimerize among themselves. However, they seem to serve as transcriptional activators by dimerizing with other (usually larger) basic-zipper proteins, such as NFE2L1/NRF1, and recruiting them to specific DNA-binding sites. Interacts with the upstream promoter region of the oxytocin receptor gene. May be a transcriptional enhancer in the up-regulation of the oxytocin receptor gene at parturition. In Bos taurus (Bovine), this protein is Transcription factor MafF (MAFF).